A 227-amino-acid polypeptide reads, in one-letter code: Pectinesterase inhibitor 28 (227 aa).

An N-terminal signal peptide occupies residues 1–25 (MASSMAPAAAMAILLLALLMPATLC). The interval 28–50 (SGPPSSKHGHGGHAKRAPPPASP) is disordered. Positions 34–43 (KHGHGGHAKR) are enriched in basic residues. Cys66 and Cys75 are disulfide-bonded. 3 N-linked (GlcNAc...) asparagine glycosylation sites follow: Asn67, Asn104, and Asn117. The cysteines at positions 139 and 179 are disulfide-linked.

It belongs to the PMEI family. In terms of tissue distribution, expressed in roots, leaves, culms and flag leaves.

The protein localises to the secreted. It is found in the extracellular space. The protein resides in the apoplast. Pectin methylesterase (PME) inhibitor that inhibits PME in vitro. Functions as a critical structural modulator by regulating the degree of pectin methylesterification and the physiochemical properties of the cell wall components. In Oryza sativa subsp. japonica (Rice), this protein is Pectinesterase inhibitor 28.